Consider the following 51-residue polypeptide: Large ribosomal subunit protein bL33 (51 aa).

Belongs to the bacterial ribosomal protein bL33 family.

This is Large ribosomal subunit protein bL33 from Pseudoalteromonas translucida (strain TAC 125).